Consider the following 444-residue polypeptide: Protein Z-dependent protease inhibitor (444 aa).

The N-terminal stretch at 1–21 (MKVVPSLLLSVLLAQVWLVPG) is a signal peptide. Positions 24–65 (PSPQSPETPAPQNQTSRVVQAPKEEEEDEQEASEEKASEEEK) are disordered. Residue Asn36 is glycosylated (N-linked (GlcNAc...) asparagine). The residue at position 56 (Ser56) is a Phosphoserine; by FAM20C. The span at 56–65 (SEEKASEEEK) shows a compositional bias: basic and acidic residues. The interval 136 to 153 (TKPGLLPSLFKGLRETLS) is heparin-binding. N-linked (GlcNAc...) asparagine glycosylation is found at Asn180, Asn197, and Asn295.

The protein belongs to the serpin family. Interacts with PROZ. In terms of processing, phosphorylated by FAM20C in the extracellular medium. In terms of tissue distribution, expressed by the liver and secreted in plasma.

It localises to the secreted. In terms of biological role, inhibits activity of the coagulation protease factor Xa in the presence of PROZ, calcium and phospholipids. Also inhibits factor XIa in the absence of cofactors. The chain is Protein Z-dependent protease inhibitor (SERPINA10) from Homo sapiens (Human).